The sequence spans 216 residues: GTP cyclohydrolase-2 (216 aa).

51 to 55 contributes to the GTP binding site; the sequence is RIHSE. Zn(2+) contacts are provided by C56, C67, and C69. GTP is bound by residues Q72, 94 to 96, and T116; that span reads EGR. The active-site Proton acceptor is the D128. The active-site Nucleophile is the R130. Positions 151 and 156 each coordinate GTP.

It belongs to the GTP cyclohydrolase II family. Zn(2+) serves as cofactor.

It catalyses the reaction GTP + 4 H2O = 2,5-diamino-6-hydroxy-4-(5-phosphoribosylamino)-pyrimidine + formate + 2 phosphate + 3 H(+). Its pathway is cofactor biosynthesis; riboflavin biosynthesis; 5-amino-6-(D-ribitylamino)uracil from GTP: step 1/4. Its function is as follows. Catalyzes the conversion of GTP to 2,5-diamino-6-ribosylamino-4(3H)-pyrimidinone 5'-phosphate (DARP), formate and pyrophosphate. The protein is GTP cyclohydrolase-2 of Haemophilus influenzae (strain 86-028NP).